We begin with the raw amino-acid sequence, 327 residues long: WRKY transcription factor WRKY76 (327 aa).

Residues alanine 56–valine 76 are a coiled coil. Residues leucine 88 to alanine 134 form a disordered region. The short motif at lysine 106–serine 112 is the Nuclear localization signal element. Residues glutamate 114–histidine 126 are compositionally biased toward polar residues. Residues aspartate 160–proline 226 constitute a DNA-binding region (WRKY).

It belongs to the WRKY group II-a family.

It is found in the nucleus. In terms of biological role, transcription repressor. Interacts specifically with the W box (5'-(T)TGAC[CT]-3'), a frequently occurring elicitor-responsive cis-acting element. Regulates, probably indirectly, the activation of defense-related genes during defense response. Modulates plant innate immunity against X.oryzae pv. oryzae (Xoo). The sequence is that of WRKY transcription factor WRKY76 from Oryza sativa subsp. indica (Rice).